A 443-amino-acid chain; its full sequence is MDEDSEVTQPQDQSCWATLPDVCLRRVFWWLGDRDRSRAALVCRKWNQIMYSADLWRYRTITFSGRPSRVHASEFESALWYVKKFGRYLEHLEIKFLNPYNAVLTKKFQVTMRGLLSCLGKSNNRLRSLSIQHLELDRLVWRNSIRGSLIKSLSFFLKKMGKHLDHLSLKGARLTVEQGCHILNSLSYMRNENVASELNIEDFFSHHLAVYGSSQFNKAMATFHNLTFLTLNYNCISDELLETLSENNAGTLRTMNIKCHVHDPHGQVVWGMSWAKLARQASNLKVNFFFERVMKYERLARILLQEIPVRSISLRSCYFSDPDWSMRPTLTDLLPTFRNTLQKLTFEFNNNHESLDEQLHLLILACRKLFYFKIWAFLDVKFVERILKSQEEGQCSLRTLKVRIYTNRYETNEEDRTLREIYRKYRKLIDSELNYFVIAYPMM.

One can recognise an F-box domain in the interval 13–59 (QSCWATLPDVCLRRVFWWLGDRDRSRAALVCRKWNQIMYSADLWRYR).

As to quaternary structure, directly interacts with SKP1 and CUL1.

Functionally, substrate-recognition component of the SCF (SKP1-CUL1-F-box protein)-type E3 ubiquitin ligase complex. This is F-box only protein 39 (Fbxo39) from Rattus norvegicus (Rat).